The following is a 395-amino-acid chain: Ribosomal RNA large subunit methyltransferase I (395 aa).

The PUA domain occupies 2 to 79; that stretch reads SSRVTLHPGR…QNESVDNGFF (78 aa).

The protein belongs to the methyltransferase superfamily. RlmI family.

Its subcellular location is the cytoplasm. It catalyses the reaction cytidine(1962) in 23S rRNA + S-adenosyl-L-methionine = 5-methylcytidine(1962) in 23S rRNA + S-adenosyl-L-homocysteine + H(+). In terms of biological role, specifically methylates the cytosine at position 1962 (m5C1962) of 23S rRNA. This Pseudoalteromonas atlantica (strain T6c / ATCC BAA-1087) protein is Ribosomal RNA large subunit methyltransferase I.